The following is a 1018-amino-acid chain: Integrator complex subunit 5 (1018 aa).

Positions 1 to 26 are disordered; the sequence is MSALCDPPGAPGPPGPAPATHGPAPL. The residue at position 2 (Ser-2) is an N-acetylserine. Residues 8–17 show a composition bias toward pro residues; that stretch reads PGAPGPPGPA. At Ser-278 the chain carries Phosphoserine. Helical transmembrane passes span 533 to 553, 855 to 875, and 929 to 949; these read LATQ…PLAF, LLFE…YCSV, and VFSQ…WGFL.

It belongs to the Integrator subunit 5 family. In terms of assembly, component of the Integrator complex, composed of core subunits INTS1, INTS2, INTS3, INTS4, INTS5, INTS6, INTS7, INTS8, INTS9/RC74, INTS10, INTS11/CPSF3L, INTS12, INTS13, INTS14 and INTS15. The core complex associates with protein phosphatase 2A subunits PPP2CA and PPP2R1A, to form the Integrator-PP2A (INTAC) complex.

The protein localises to the nucleus. It is found in the cytoplasm. It localises to the nucleus membrane. In terms of biological role, component of the integrator complex, a multiprotein complex that terminates RNA polymerase II (Pol II) transcription in the promoter-proximal region of genes. The integrator complex provides a quality checkpoint during transcription elongation by driving premature transcription termination of transcripts that are unfavorably configured for transcriptional elongation: the complex terminates transcription by (1) catalyzing dephosphorylation of the C-terminal domain (CTD) of Pol II subunit POLR2A/RPB1 and SUPT5H/SPT5, (2) degrading the exiting nascent RNA transcript via endonuclease activity and (3) promoting the release of Pol II from bound DNA. The integrator complex is also involved in terminating the synthesis of non-coding Pol II transcripts, such as enhancer RNAs (eRNAs), small nuclear RNAs (snRNAs), telomerase RNAs and long non-coding RNAs (lncRNAs). Mediates recruitment of cytoplasmic dynein to the nuclear envelope, probably as component of the integrator complex. The polypeptide is Integrator complex subunit 5 (Ints5) (Mus musculus (Mouse)).